A 330-amino-acid chain; its full sequence is Protein qutG (330 aa).

Residues Glu-78, Asp-100, Leu-102, Asp-103, and Asp-251 each contribute to the Mg(2+) site. Glu-78 serves as a coordination point for substrate. Substrate-binding positions include 102 to 105 (LDGT) and Asp-251.

Belongs to the inositol monophosphatase superfamily.

Functionally, not known. Probably involved in quinate metabolism. The protein is Protein qutG (qutG) of Emericella nidulans (strain FGSC A4 / ATCC 38163 / CBS 112.46 / NRRL 194 / M139) (Aspergillus nidulans).